Reading from the N-terminus, the 537-residue chain is Putative cysteine ligase BshC (537 aa).

Positions I422 to I450 form a coiled coil.

It belongs to the BshC family.

Its function is as follows. Involved in bacillithiol (BSH) biosynthesis. May catalyze the last step of the pathway, the addition of cysteine to glucosamine malate (GlcN-Mal) to generate BSH. The polypeptide is Putative cysteine ligase BshC (Staphylococcus aureus (strain MRSA252)).